Here is a 227-residue protein sequence, read N- to C-terminus: Glutathione S-transferase U7 (227 aa).

The 80-residue stretch at 8–87 folds into the GST N-terminal domain; the sequence is EEVKLLGMWA…YIDETWRDNP (80 aa). Glutathione is bound by residues 18 to 19, 44 to 45, 58 to 59, and 71 to 72; these read SP, NK, MI, and ES. The GST C-terminal domain maps to 92–215; the sequence is DPYERTMARF…PPEDEHLKYI (124 aa).

Belongs to the GST superfamily. Tau family.

The protein resides in the cytoplasm. Its subcellular location is the cytosol. The catalysed reaction is RX + glutathione = an S-substituted glutathione + a halide anion + H(+). May be involved in the conjugation of reduced glutathione to a wide number of exogenous and endogenous hydrophobic electrophiles and have a detoxification role against certain herbicides. This chain is Glutathione S-transferase U7 (GSTU7), found in Arabidopsis thaliana (Mouse-ear cress).